The sequence spans 117 residues: Holo-[acyl-carrier-protein] synthase (117 aa).

Residues D8 and E57 each coordinate Mg(2+).

It belongs to the P-Pant transferase superfamily. AcpS family. Requires Mg(2+) as cofactor.

The protein localises to the cytoplasm. It carries out the reaction apo-[ACP] + CoA = holo-[ACP] + adenosine 3',5'-bisphosphate + H(+). Functionally, transfers the 4'-phosphopantetheine moiety from coenzyme A to a Ser of acyl-carrier-protein. This chain is Holo-[acyl-carrier-protein] synthase, found in Limosilactobacillus reuteri (Lactobacillus reuteri).